The following is a 96-amino-acid chain: Small ribosomal subunit protein uS19 (96 aa).

It belongs to the universal ribosomal protein uS19 family.

Functionally, protein S19 forms a complex with S13 that binds strongly to the 16S ribosomal RNA. In Koribacter versatilis (strain Ellin345), this protein is Small ribosomal subunit protein uS19.